Reading from the N-terminus, the 814-residue chain is Microbial collagenase (814 aa).

An N-terminal signal peptide occupies residues Met1–Ala21. A propeptide spanning residues Leu22–Ser75 is cleaved from the precursor. His477 is a binding site for Zn(2+). Glu478 is an active-site residue. His481 serves as a coordination point for Zn(2+). Positions Ala609 to Asp697 constitute a PKD domain.

This sequence belongs to the peptidase M9A family. Requires Zn(2+) as cofactor. Proteolytic cleavage might yield three different active forms.

The protein resides in the secreted. The enzyme catalyses Digestion of native collagen in the triple helical region at Xaa-|-Gly bonds. With synthetic peptides, a preference is shown for Gly at P3 and P1', Pro and Ala at P2 and P2', and hydroxyproline, Ala or Arg at P3'.. The polypeptide is Microbial collagenase (Vibrio alginolyticus).